Here is a 231-residue protein sequence, read N- to C-terminus: LexA repressor (231 aa).

Residues 26-46 constitute a DNA-binding region (H-T-H motif); sequence FEEMKEALDLKSKSGIHRLIG. Residues serine 152 and lysine 190 each act as for autocatalytic cleavage activity in the active site.

Belongs to the peptidase S24 family. Homodimer.

The enzyme catalyses Hydrolysis of Ala-|-Gly bond in repressor LexA.. Its function is as follows. Represses a number of genes involved in the response to DNA damage (SOS response), including recA and lexA. In the presence of single-stranded DNA, RecA interacts with LexA causing an autocatalytic cleavage which disrupts the DNA-binding part of LexA, leading to derepression of the SOS regulon and eventually DNA repair. This chain is LexA repressor, found in Acidiphilium cryptum (strain JF-5).